The following is a 602-amino-acid chain: Elongation factor 4 (602 aa).

In terms of domain architecture, tr-type G spans 7–189; that stretch reads RNIRNFSIIA…AIVQRIPAPQ (183 aa). GTP contacts are provided by residues 19–24 and 136–139; these read DHGKST and NKID.

This sequence belongs to the TRAFAC class translation factor GTPase superfamily. Classic translation factor GTPase family. LepA subfamily.

It localises to the cell inner membrane. It carries out the reaction GTP + H2O = GDP + phosphate + H(+). Functionally, required for accurate and efficient protein synthesis under certain stress conditions. May act as a fidelity factor of the translation reaction, by catalyzing a one-codon backward translocation of tRNAs on improperly translocated ribosomes. Back-translocation proceeds from a post-translocation (POST) complex to a pre-translocation (PRE) complex, thus giving elongation factor G a second chance to translocate the tRNAs correctly. Binds to ribosomes in a GTP-dependent manner. This is Elongation factor 4 from Xylella fastidiosa (strain 9a5c).